A 239-amino-acid chain; its full sequence is MGRKWANIKEKKASKDKTNSRIYAKFGIEIYVAAKSGDPDPHSNQKLRFVIERAKTYNVPKHIIDRAIEKAKGTGDETYSELRYEGFGPNGSMIIVDALTNNVNRTASDVRAAYSKNGGNMGVSGSVAYMFDNTAIFGVEGKDADELLELLMEADIDVRDILDEDGQAIIYAEPEDFHKVQEGLKAAGIEEFTVAEIEMIPQNDIQLSGEDLEKFERLIDALEDLEDVQKVYHNVELED.

The protein belongs to the TACO1 family. YeeN subfamily.

It localises to the cytoplasm. The chain is Probable transcriptional regulatory protein lmo0369 from Listeria monocytogenes serovar 1/2a (strain ATCC BAA-679 / EGD-e).